The following is a 163-amino-acid chain: Bacterial microcompartment assembly protein PduM (163 aa).

It belongs to the PduM family. In terms of assembly, interacts with shell protein PduK.

The protein localises to the bacterial microcompartment. Its pathway is polyol metabolism; 1,2-propanediol degradation. Plays an essential role in assembly and/or stability of the bacterial microcompartment (BMC) dedicated to 1,2-propanediol (1,2-PD) degradation. Functionally, expression of a cosmid containing the full 21-gene pdu operon in E.coli allows E.coli to grow on 1,2-propanediol (1,2-PD) with the appearance of bacterial microcompartments (BMC) in its cytoplasm. Its function is as follows. The 1,2-PD-specific bacterial microcompartment (BMC) concentrates low levels of 1,2-PD catabolic enzymes, concentrates volatile reaction intermediates thus enhancing pathway flux and keeps the level of toxic, mutagenic propionaldehyde low. This Citrobacter freundii protein is Bacterial microcompartment assembly protein PduM.